A 423-amino-acid chain; its full sequence is UDP-N-acetylglucosamine 1-carboxyvinyltransferase 2 (423 aa).

Residue 23–24 participates in phosphoenolpyruvate binding; that stretch reads KN. Residue Arg-96 participates in UDP-N-acetyl-alpha-D-glucosamine binding. Cys-120 serves as the catalytic Proton donor. Position 120 is a 2-(S-cysteinyl)pyruvic acid O-phosphothioketal (Cys-120). UDP-N-acetyl-alpha-D-glucosamine is bound by residues 125–129, Asp-309, and Val-331; that span reads RPIDL.

It belongs to the EPSP synthase family. MurA subfamily.

It localises to the cytoplasm. It catalyses the reaction phosphoenolpyruvate + UDP-N-acetyl-alpha-D-glucosamine = UDP-N-acetyl-3-O-(1-carboxyvinyl)-alpha-D-glucosamine + phosphate. It participates in cell wall biogenesis; peptidoglycan biosynthesis. Cell wall formation. Adds enolpyruvyl to UDP-N-acetylglucosamine. This chain is UDP-N-acetylglucosamine 1-carboxyvinyltransferase 2, found in Streptococcus agalactiae serotype III (strain NEM316).